Here is a 465-residue protein sequence, read N- to C-terminus: Asparagine--tRNA ligase (465 aa).

The protein belongs to the class-II aminoacyl-tRNA synthetase family. In terms of assembly, homodimer.

The protein localises to the cytoplasm. It carries out the reaction tRNA(Asn) + L-asparagine + ATP = L-asparaginyl-tRNA(Asn) + AMP + diphosphate + H(+). The sequence is that of Asparagine--tRNA ligase from Clostridium perfringens (strain SM101 / Type A).